Here is a 171-residue protein sequence, read N- to C-terminus: Glutathione peroxidase-like peroxiredoxin GPX3 (171 aa).

The active-site Cysteine sulfenic acid (-SOH) intermediate is the cysteine 43. Cysteine 43 and cysteine 89 are oxidised to a cystine.

The protein belongs to the glutathione peroxidase family. As to quaternary structure, interacts with CAP1 and probably YBP1.

It carries out the reaction a hydroperoxide + [thioredoxin]-dithiol = an alcohol + [thioredoxin]-disulfide + H2O. In terms of biological role, involved in oxidative stress response and redox homeostasis. Functions as a sensor and transducer of hydroperoxide stress. In response to hydroperoxide stress it oxidizes (activates) the transcription activator CAP1, which is involved in transcription activation of genes of the oxidative stress response pathway. May also play a direct role in hydroperoxide scavenging. The enzyme is not required for the glutaredoxin-mediated antioxidant function. In the presence of peroxides, GPX3 is directly oxidized at Cys-43 to form a cysteine sulfenic acid (-SOH). Cys-43-SOH then forms either an intramolecular disulfide bond (Cys-43 with Cys-89) or a transient, intermolecular disulfide bond with 'Cys-446' of CAP1, which is further resolved into a CAP1 intramolecular disulfide bond ('Cys-303' with 'Cys-598'), which causes its nuclear accumulation and activation, and a reduced Cys-43 in GPX3. Required for C.albicans-mediated macrophage killing. This is Glutathione peroxidase-like peroxiredoxin GPX3 from Candida albicans (strain SC5314 / ATCC MYA-2876) (Yeast).